The sequence spans 215 residues: Probable transaldolase (215 aa).

Catalysis depends on K83, which acts as the Schiff-base intermediate with substrate.

This sequence belongs to the transaldolase family. Type 3B subfamily.

It is found in the cytoplasm. It catalyses the reaction D-sedoheptulose 7-phosphate + D-glyceraldehyde 3-phosphate = D-erythrose 4-phosphate + beta-D-fructose 6-phosphate. Its pathway is carbohydrate degradation; pentose phosphate pathway; D-glyceraldehyde 3-phosphate and beta-D-fructose 6-phosphate from D-ribose 5-phosphate and D-xylulose 5-phosphate (non-oxidative stage): step 2/3. Functionally, transaldolase is important for the balance of metabolites in the pentose-phosphate pathway. In Heliobacterium modesticaldum (strain ATCC 51547 / Ice1), this protein is Probable transaldolase.